The sequence spans 124 residues: Protein MGF 110-4L (124 aa).

The first 28 residues, 1–28 (MLVIFLGILGLLANQVLGLPIQAGGHLC), serve as a signal peptide directing secretion. An N-linked (GlcNAc...) asparagine; by host glycan is attached at Asn64. Positions 121–124 (KEDL) match the Prevents secretion from ER motif.

The protein belongs to the asfivirus MGF 110 family.

The protein localises to the virion. It is found in the host endoplasmic reticulum-Golgi intermediate compartment. Its function is as follows. Causes the redistribution of lumenal ER protein to an enlarged ERGIC compartment. The chain is Protein MGF 110-4L from Ornithodoros (relapsing fever ticks).